The primary structure comprises 472 residues: Na(+)/H(+) antiporter NhaA (472 aa).

A run of 10 helical transmembrane segments spans residues 24–44, 66–86, 108–128, 156–176, 196–216, 234–254, 290–310, 312–332, 361–381, and 392–412; these read ISGL…NLPA, LPIG…TVGL, LCAV…TALF, GWAV…ALFA, LLAI…YWFI, VPWI…FEAG, PFSA…VHFE, MSPL…LVVG, MIPA…IASL, and ARFG…VLLS. A disordered region spans residues 422–472; the sequence is AAAAAADEEDDESIDGDGIGQPSHTTEPTTPTEHPGTLADGTASVEIDFRH. Residues 427-436 show a composition bias toward acidic residues; sequence ADEEDDESID. Low complexity predominate over residues 445-456; that stretch reads HTTEPTTPTEHP.

This sequence belongs to the NhaA Na(+)/H(+) (TC 2.A.33) antiporter family.

It localises to the cell membrane. It carries out the reaction Na(+)(in) + 2 H(+)(out) = Na(+)(out) + 2 H(+)(in). Its function is as follows. Na(+)/H(+) antiporter that extrudes sodium in exchange for external protons. This Bifidobacterium longum (strain NCC 2705) protein is Na(+)/H(+) antiporter NhaA.